The primary structure comprises 159 residues: Phosphopantetheine adenylyltransferase (159 aa).

T10 contributes to the substrate binding site. ATP is bound by residues 10–11 (TF) and H18. 3 residues coordinate substrate: K42, L73, and R87. ATP-binding positions include 88–90 (GLR), E98, and 123–129 (YSYVSGT).

This sequence belongs to the bacterial CoaD family. In terms of assembly, homohexamer. The cofactor is Mg(2+).

The protein localises to the cytoplasm. The catalysed reaction is (R)-4'-phosphopantetheine + ATP + H(+) = 3'-dephospho-CoA + diphosphate. It functions in the pathway cofactor biosynthesis; coenzyme A biosynthesis; CoA from (R)-pantothenate: step 4/5. Its function is as follows. Reversibly transfers an adenylyl group from ATP to 4'-phosphopantetheine, yielding dephospho-CoA (dPCoA) and pyrophosphate. The sequence is that of Phosphopantetheine adenylyltransferase from Coxiella burnetii (strain CbuK_Q154) (Coxiella burnetii (strain Q154)).